Consider the following 102-residue polypeptide: Co-chaperonin GroES (102 aa).

Belongs to the GroES chaperonin family. Heptamer of 7 subunits arranged in a ring. Interacts with the chaperonin GroEL.

It localises to the cytoplasm. Its function is as follows. Together with the chaperonin GroEL, plays an essential role in assisting protein folding. The GroEL-GroES system forms a nano-cage that allows encapsulation of the non-native substrate proteins and provides a physical environment optimized to promote and accelerate protein folding. GroES binds to the apical surface of the GroEL ring, thereby capping the opening of the GroEL channel. This chain is Co-chaperonin GroES, found in Chlamydia pneumoniae (Chlamydophila pneumoniae).